A 240-amino-acid chain; its full sequence is Ribonuclease PH (240 aa).

Residues Arg87 and 125–127 (GTR) contribute to the phosphate site.

This sequence belongs to the RNase PH family. Homohexameric ring arranged as a trimer of dimers.

The catalysed reaction is tRNA(n+1) + phosphate = tRNA(n) + a ribonucleoside 5'-diphosphate. Phosphorolytic 3'-5' exoribonuclease that plays an important role in tRNA 3'-end maturation. Removes nucleotide residues following the 3'-CCA terminus of tRNAs; can also add nucleotides to the ends of RNA molecules by using nucleoside diphosphates as substrates, but this may not be physiologically important. Probably plays a role in initiation of 16S rRNA degradation (leading to ribosome degradation) during starvation. The sequence is that of Ribonuclease PH from Pseudomonas fluorescens (strain Pf0-1).